The sequence spans 591 residues: L-fucose isomerase (591 aa).

Residues glutamate 337 and aspartate 361 each act as proton acceptor in the active site. Mn(2+) contacts are provided by glutamate 337, aspartate 361, and histidine 528.

Belongs to the L-fucose isomerase family. Homohexamer. Mn(2+) serves as cofactor.

The protein resides in the cytoplasm. The catalysed reaction is L-fucose = L-fuculose. The enzyme catalyses D-arabinose = D-ribulose. It catalyses the reaction L-xylopyranose = L-xylulose. Its pathway is carbohydrate degradation; L-fucose degradation; L-lactaldehyde and glycerone phosphate from L-fucose: step 1/3. Its activity is regulated as follows. Inhibited by ribitol, L-arabitol and dulcitol. Isomerization of L-xylulose to L-xylose is inhibited by xylitol. Converts the aldose L-fucose into the corresponding ketose L-fuculose. Also converts D-arabinose into D-ribulose. In addition, catalyzes the isomerization of L-xylulose to L-xylose. In Escherichia coli (strain K12), this protein is L-fucose isomerase.